Reading from the N-terminus, the 445-residue chain is UDP-N-acetylmuramoylalanine--D-glutamate ligase (445 aa).

ATP is bound at residue 126–132 (GTSGKTT).

It belongs to the MurCDEF family.

It is found in the cytoplasm. It catalyses the reaction UDP-N-acetyl-alpha-D-muramoyl-L-alanine + D-glutamate + ATP = UDP-N-acetyl-alpha-D-muramoyl-L-alanyl-D-glutamate + ADP + phosphate + H(+). The protein operates within cell wall biogenesis; peptidoglycan biosynthesis. Functionally, cell wall formation. Catalyzes the addition of glutamate to the nucleotide precursor UDP-N-acetylmuramoyl-L-alanine (UMA). The protein is UDP-N-acetylmuramoylalanine--D-glutamate ligase of Nitratidesulfovibrio vulgaris (strain DSM 19637 / Miyazaki F) (Desulfovibrio vulgaris).